We begin with the raw amino-acid sequence, 68 residues long: Ferredoxin Fdx (68 aa).

Cys12, Gln13, Ala16, Cys18, and Cys56 together coordinate [3Fe-4S] cluster.

Requires [3Fe-4S] cluster as cofactor.

In terms of biological role, ferredoxin that is the redox partner of cytochrome CYP51, a sterol 14alpha-demethylase encoded by an adjacent gene. This chain is Ferredoxin Fdx, found in Mycobacterium tuberculosis (strain ATCC 25618 / H37Rv).